The sequence spans 129 residues: NADH-quinone oxidoreductase subunit A (129 aa).

The next 3 helical transmembrane spans lie at 9–29 (FPIG…LGLA), 68–88 (LLFI…VLLL), and 97–117 (LGWP…AGLV).

The protein belongs to the complex I subunit 3 family. As to quaternary structure, NDH-1 is composed of 14 different subunits. Subunits NuoA, H, J, K, L, M, N constitute the membrane sector of the complex.

The protein localises to the cell inner membrane. It catalyses the reaction a quinone + NADH + 5 H(+)(in) = a quinol + NAD(+) + 4 H(+)(out). Functionally, NDH-1 shuttles electrons from NADH, via FMN and iron-sulfur (Fe-S) centers, to quinones in the respiratory chain. The immediate electron acceptor for the enzyme in this species is believed to be ubiquinone. Couples the redox reaction to proton translocation (for every two electrons transferred, four hydrogen ions are translocated across the cytoplasmic membrane), and thus conserves the redox energy in a proton gradient. The polypeptide is NADH-quinone oxidoreductase subunit A (Anaeromyxobacter dehalogenans (strain 2CP-C)).